The sequence spans 51 residues: MARNKPLARKLRLAAAYKENRPVPIWVSVKTRLKVRRGFRLRHWRRTKLKV.

The protein belongs to the eukaryotic ribosomal protein eL39 family.

The protein is Large ribosomal subunit protein eL39 of Staphylothermus marinus (strain ATCC 43588 / DSM 3639 / JCM 9404 / F1).